A 765-amino-acid chain; its full sequence is MSVALQELGGGGNMVEYKRATLRDEDAPETPVEGGASPDAVEAGFRKRTSRLLGLHTQLELVLAGVSLLLAALLLGCLVALGVQYHRDPSHSTCLTEACIRVAGKILESLDRGVSPCEDFYQFSCGGWIRRNPLPDGRSRWNTFNSLWDQNQAILKHLLENTTFNSSSEAERKTQRFYLSCLQVERIEELGAQPLRDLIDKIGGWNVTGPWDQDNFMEVLKAVAGTYRATPFFTVYVSADSKSSNSNIIQVDQSGLFLPSRDYYLNRTANEKVLTAYLDYMEELGMLLGGQPTSTREQMRQVLELEIQLANITVPQDQRRDEEKIYHKMSIAELQALAPSMDWLEFLSFLLSPLELGDSEPVVVYGTDYLQQVSELINRTEPSVLNNYLIWNLVQKTTSSLDHRFESAQEKLLETLYGTKKSCTPRWQTCISNTDDALGFALGSLFVKATFDRQSKEIAEGMISEIRAAFEEALGHLVWMDEKTRQAAKEKADAIYDMIGFPDFILEPKELDDVYDGYEVSEDSFFQNMLNLYNFSAKVMADQLRKPPSRDQWSMTPQTVNAYYLPTKNEIVFPAGILQAPFYTCNHPKALNFGGIGVVMGHELTHAFDDQGREYDKEGNLRPWWQNESLAAFRNHTACIEEQYSQYQVNGEKLNGRQTLGENIADNGGLKAAYNAYKAWLRKHGEEQQLPAVGLTNHQLFFVGFAQVWCSVRTPESSHEGLVTDPHSPARFRVLGTLSNSRDFLRHFGCPVGSPMNSGQLCEVW.

The Cytoplasmic segment spans residues 1–60 (MSVALQELGGGGNMVEYKRATLRDEDAPETPVEGGASPDAVEAGFRKRTSRLLGLHTQLE). The chain crosses the membrane as a helical; Signal-anchor for type II membrane protein span at residues 61–81 (LVLAGVSLLLAALLLGCLVAL). Residues 82–765 (GVQYHRDPSH…MNSGQLCEVW (684 aa)) lie on the Lumenal side of the membrane. The region spanning 93–765 (TCLTEACIRV…MNSGQLCEVW (673 aa)) is the Peptidase M13 domain. Cystine bridges form between cysteine 94–cysteine 99, cysteine 117–cysteine 750, cysteine 125–cysteine 710, cysteine 181–cysteine 430, and cysteine 639–cysteine 762. 7 N-linked (GlcNAc...) asparagine glycosylation sites follow: asparagine 161, asparagine 165, asparagine 206, asparagine 266, asparagine 311, asparagine 378, and asparagine 534. Zn(2+) is bound at residue histidine 602. Glutamate 603 is a catalytic residue. Residue histidine 606 participates in Zn(2+) binding. N-linked (GlcNAc...) asparagine glycosylation is found at asparagine 627 and asparagine 635. Glutamate 662 is a Zn(2+) binding site. Aspartate 666 functions as the Proton donor in the catalytic mechanism.

Belongs to the peptidase M13 family. Requires Zn(2+) as cofactor. As to expression, isoform ECE2-1 and isoform ECE2-2 are expressed in brain and adrenal gland.

The protein resides in the golgi apparatus membrane. Its subcellular location is the cytoplasmic vesicle. It is found in the secretory vesicle membrane. It catalyses the reaction Hydrolysis of the 21-Trp-|-Val-22 bond in big endothelin to form endothelin 1.. Converts big endothelin-1 to endothelin-1. Also involved in the processing of various neuroendocrine peptides, including neurotensin, angiotensin I, substance P, proenkephalin-derived peptides, and prodynorphin-derived peptides. May play a role in amyloid-beta processing. This Bos taurus (Bovine) protein is Endothelin-converting enzyme 2.